Consider the following 407-residue polypeptide: Imidazolonepropionase (407 aa).

Fe(3+)-binding residues include H68 and H70. Zn(2+) contacts are provided by H68 and H70. The 4-imidazolone-5-propanoate site is built by R77, Y140, and H173. Y140 lines the N-formimidoyl-L-glutamate pocket. A Fe(3+)-binding site is contributed by H238. H238 provides a ligand contact to Zn(2+). Q241 serves as a coordination point for 4-imidazolone-5-propanoate. Position 313 (D313) interacts with Fe(3+). D313 serves as a coordination point for Zn(2+). The N-formimidoyl-L-glutamate site is built by N315 and G317. Residue T318 participates in 4-imidazolone-5-propanoate binding.

This sequence belongs to the metallo-dependent hydrolases superfamily. HutI family. Zn(2+) serves as cofactor. Requires Fe(3+) as cofactor.

The protein resides in the cytoplasm. The enzyme catalyses 4-imidazolone-5-propanoate + H2O = N-formimidoyl-L-glutamate. Its pathway is amino-acid degradation; L-histidine degradation into L-glutamate; N-formimidoyl-L-glutamate from L-histidine: step 3/3. Functionally, catalyzes the hydrolytic cleavage of the carbon-nitrogen bond in imidazolone-5-propanoate to yield N-formimidoyl-L-glutamate. It is the third step in the universal histidine degradation pathway. The protein is Imidazolonepropionase of Burkholderia ambifaria (strain ATCC BAA-244 / DSM 16087 / CCUG 44356 / LMG 19182 / AMMD) (Burkholderia cepacia (strain AMMD)).